A 611-amino-acid chain; its full sequence is V-type proton ATPase catalytic subunit A (611 aa).

244–251 (GAFGCGKT) contributes to the ATP binding site.

This sequence belongs to the ATPase alpha/beta chains family. As to quaternary structure, V-ATPase is a heteromultimeric enzyme made up of two complexes: the ATP-hydrolytic V1 complex and the proton translocation V0 complex. The V1 complex consists of three catalytic AB heterodimers that form a heterohexamer, three peripheral stalks each consisting of EG heterodimers, one central rotor including subunits D and F, and the regulatory subunits C and H. The proton translocation complex V0 consists of the proton transport subunit a, a ring of proteolipid subunits c9c'', rotary subunit d and subunit e.

The protein localises to the cell membrane. The protein resides in the vacuole. It localises to the vesicle. It catalyses the reaction ATP + H2O + 4 H(+)(in) = ADP + phosphate + 5 H(+)(out). With respect to regulation, ATP hydrolysis occurs at the interface between the nucleotide-binding domains of subunits A and B. ATP hydrolysis triggers a conformational change in the subunits D and F, which induces a shift of subunit d. The c-ring is subsequently rotated and results in a continuous proton translocation across the membrane. In terms of biological role, catalytic subunit of the V1 complex of vacuolar(H+)-ATPase (V-ATPase), a multisubunit enzyme composed of a peripheral complex (V1) that hydrolyzes ATP and a membrane integral complex (V0) that translocates protons. V-ATPase is responsible for acidifying and maintaining the pH of intracellular compartments and in some cell types, is targeted to the plasma membrane, where it is responsible for acidifying the extracellular environment. During the trophozoite stage, involved in the acidification of the extracellular space next to the cell membrane. The polypeptide is V-type proton ATPase catalytic subunit A (Plasmodium falciparum (isolate 3D7)).